The chain runs to 220 residues: Type-4 uracil-DNA glycosylase (220 aa).

[4Fe-4S] cluster is bound by residues C14 and C17. Residues 41–43 (GEA), F55, and N82 contribute to the uracil site. C86 and C102 together coordinate [4Fe-4S] cluster. H164 is a uracil binding site.

The protein belongs to the uracil-DNA glycosylase (UDG) superfamily. Type 4 (UDGa) family.

It carries out the reaction Hydrolyzes single-stranded DNA or mismatched double-stranded DNA and polynucleotides, releasing free uracil.. In terms of biological role, removes uracil bases that are present in DNA as a result of either deamination of cytosine or misincorporation of dUMP instead of dTMP. This chain is Type-4 uracil-DNA glycosylase, found in Sulfurisphaera tokodaii (strain DSM 16993 / JCM 10545 / NBRC 100140 / 7) (Sulfolobus tokodaii).